The chain runs to 93 residues: uncharacterized protein (93 aa).

The next 3 membrane-spanning stretches (helical) occupy residues 15 to 35, 48 to 68, and 72 to 92; these read MAGLRVLSSMIELTAAIVMLV, ILAIVGPLIFIITMTVGIYQI, and LSYAKLILIFTGVVLILAGVH.

It localises to the cell membrane. This is an uncharacterized protein from Bacillus subtilis (strain 168).